The primary structure comprises 274 residues: Large ribosomal subunit protein uL2 (274 aa).

The tract at residues 224–254 is disordered; the sequence is AMNPVDHPHGGGEGRTGEGQAPVSPWNTLTK. Basic and acidic residues predominate over residues 229-239; it reads DHPHGGGEGRT.

It belongs to the universal ribosomal protein uL2 family. In terms of assembly, part of the 50S ribosomal subunit. Forms a bridge to the 30S subunit in the 70S ribosome.

In terms of biological role, one of the primary rRNA binding proteins. Required for association of the 30S and 50S subunits to form the 70S ribosome, for tRNA binding and peptide bond formation. It has been suggested to have peptidyltransferase activity; this is somewhat controversial. Makes several contacts with the 16S rRNA in the 70S ribosome. This Leptothrix cholodnii (strain ATCC 51168 / LMG 8142 / SP-6) (Leptothrix discophora (strain SP-6)) protein is Large ribosomal subunit protein uL2.